The primary structure comprises 155 residues: Low molecular weight phosphotyrosine protein phosphatase 1 (155 aa).

Cysteine 9 (nucleophile) is an active-site residue. Arginine 15 is an active-site residue. Residue aspartate 124 is the Proton donor of the active site.

Belongs to the low molecular weight phosphotyrosine protein phosphatase family. Cone cells and primary pigment cells in developing pupal retina.

The protein localises to the cytoplasm. It carries out the reaction O-phospho-L-tyrosyl-[protein] + H2O = L-tyrosyl-[protein] + phosphate. The catalysed reaction is a phosphate monoester + H2O = an alcohol + phosphate. Acts on tyrosine phosphorylated proteins, low-MW aryl phosphates and natural and synthetic acyl phosphates. The polypeptide is Low molecular weight phosphotyrosine protein phosphatase 1 (primo-1) (Drosophila melanogaster (Fruit fly)).